We begin with the raw amino-acid sequence, 867 residues long: Coiled-coil domain-containing protein 80 (867 aa).

The first 18 residues, 1-18 (MRARYMLGFGVLCLLTWA), serve as a signal peptide directing secretion. 2 disordered regions span residues 83–121 (RKVL…SSAG) and 282–539 (DSQV…GTLA). Over residues 95 to 104 (GTRNPIQQDD) the composition is skewed to polar residues. A compositionally biased stretch (basic and acidic residues) spans 288 to 297 (PTERRKEIRK). Over residues 301–370 (RPTTTTTPAP…PRTTRANTTP (70 aa)) the composition is skewed to low complexity. The segment covering 401–412 (ARYRDNHTSKKE) has biased composition (basic and acidic residues). Basic residues predominate over residues 426–435 (KPTKVRPTKK). Residues 436-451 (KNGDKDISNAYEEKYD) are compositionally biased toward basic and acidic residues. Over residues 471–483 (KRGKGKTDKKKKK) the composition is skewed to basic residues. 2 stretches are compositionally biased toward basic and acidic residues: residues 484-504 (DKTD…DGKG) and 514-523 (KILEKEDYQK).

Belongs to the CCDC80 family. Binds to various extracellular matrix proteins.

It is found in the secreted. The protein resides in the extracellular space. Its subcellular location is the extracellular matrix. Functionally, promotes cell adhesion and matrix assembly. The protein is Coiled-coil domain-containing protein 80 (ccdc80) of Danio rerio (Zebrafish).